The chain runs to 299 residues: Deoxyhypusine hydroxylase (299 aa).

5 HEAT-like PBS-type repeats span residues 54–80, 87–113, 174–200, 205–231, and 238–264; these read LKHELAFCLGQMRDRAAIPALLGVLQD, VRHEAGEALGAIGDPEVLDVLRRYSED, DRYRAMFALRNLGGRDAVLALADGLRA, FRHEIGYVLGQMQDEACVPQLTAALRS, and VRHECAEALGSIARPSCLETLRAFAQD. Positions 56, 89, and 90 each coordinate Fe cation. The Fe cation site is built by His-207, His-240, and Glu-241.

Belongs to the deoxyhypusine hydroxylase family. Fe(2+) is required as a cofactor.

The catalysed reaction is [eIF5A protein]-deoxyhypusine + AH2 + O2 = [eIF5A protein]-hypusine + A + H2O. It functions in the pathway protein modification; eIF5A hypusination. Its function is as follows. Catalyzes the hydroxylation of the N(6)-(4-aminobutyl)-L-lysine intermediate produced by deoxyhypusine synthase/DHPS on a critical lysine of the eukaryotic translation initiation factor 5A/eIF-5A. This is the second step of the post-translational modification of that lysine into an unusual amino acid residue named hypusine. Hypusination is unique to mature eIF-5A factor and is essential for its function. The sequence is that of Deoxyhypusine hydroxylase from Gallus gallus (Chicken).